The following is a 141-amino-acid chain: Large ribosomal subunit protein uL11 (141 aa).

The protein belongs to the universal ribosomal protein uL11 family. Part of the ribosomal stalk of the 50S ribosomal subunit. Interacts with L10 and the large rRNA to form the base of the stalk. L10 forms an elongated spine to which L12 dimers bind in a sequential fashion forming a multimeric L10(L12)X complex. One or more lysine residues are methylated.

Forms part of the ribosomal stalk which helps the ribosome interact with GTP-bound translation factors. The protein is Large ribosomal subunit protein uL11 of Acaryochloris marina (strain MBIC 11017).